The sequence spans 388 residues: Succinate--CoA ligase [ADP-forming] subunit beta (388 aa).

Residues 9 to 244 (KEILRKFGVA…LDEEDPAEIE (236 aa)) form the ATP-grasp domain. ATP is bound by residues Lys46, 53–55 (GRG), Glu99, Ala102, and Glu107. The Mg(2+) site is built by Asn199 and Asp213. Substrate is bound by residues Asn264 and 321 to 323 (GIM).

It belongs to the succinate/malate CoA ligase beta subunit family. In terms of assembly, heterotetramer of two alpha and two beta subunits. The cofactor is Mg(2+).

It carries out the reaction succinate + ATP + CoA = succinyl-CoA + ADP + phosphate. The enzyme catalyses GTP + succinate + CoA = succinyl-CoA + GDP + phosphate. Its pathway is carbohydrate metabolism; tricarboxylic acid cycle; succinate from succinyl-CoA (ligase route): step 1/1. Its function is as follows. Succinyl-CoA synthetase functions in the citric acid cycle (TCA), coupling the hydrolysis of succinyl-CoA to the synthesis of either ATP or GTP and thus represents the only step of substrate-level phosphorylation in the TCA. The beta subunit provides nucleotide specificity of the enzyme and binds the substrate succinate, while the binding sites for coenzyme A and phosphate are found in the alpha subunit. The protein is Succinate--CoA ligase [ADP-forming] subunit beta of Burkholderia cenocepacia (strain HI2424).